Consider the following 351-residue polypeptide: Apolipoprotein L4 (351 aa).

The N-terminal stretch at 1–21 (MEGAALLKIFVVCIWVQQNHP) is a signal peptide.

This sequence belongs to the apolipoprotein L family. In terms of tissue distribution, widely expressed; the highest levels are in spinal cord, placenta, adrenal gland; also detected in spleen, bone marrow, uterus, trachea, mammary gland and testis; levels are low in brain, heart and pancreas.

It is found in the secreted. Functionally, may play a role in lipid exchange and transport throughout the body. May participate in reverse cholesterol transport from peripheral cells to the liver. The chain is Apolipoprotein L4 (APOL4) from Homo sapiens (Human).